A 155-amino-acid polypeptide reads, in one-letter code: RING finger protein 122 (155 aa).

The chain crosses the membrane as a helical span at residues 40-60; it reads VIFGTGIFVFMLSLIFCCYFI. The RING-type; atypical zinc-finger motif lies at 93–134; that stretch reads CAVCLEDFKGKDELGVLPCQHAFHRKCLVKWLEVRCVCPMCN.

As to expression, widely expressed in several tissues and cell lines.

The protein resides in the golgi apparatus. It localises to the endoplasmic reticulum. It is found in the membrane. Functionally, may induce necrosis and apoptosis. May play a role in cell viability. This Homo sapiens (Human) protein is RING finger protein 122 (RNF122).